A 435-amino-acid chain; its full sequence is Serine/threonine-protein kinase 40 (435 aa).

One can recognise a Protein kinase domain in the interval F35–I332. Residues L41–I49 and K66 each bind ATP. Catalysis depends on D197, which acts as the Proton acceptor.

It belongs to the protein kinase superfamily. CAMK Ser/Thr protein kinase family.

It localises to the nucleus. It is found in the cytoplasm. It catalyses the reaction L-seryl-[protein] + ATP = O-phospho-L-seryl-[protein] + ADP + H(+). The enzyme catalyses L-threonyl-[protein] + ATP = O-phospho-L-threonyl-[protein] + ADP + H(+). In terms of biological role, may be a negative regulator of NF-kappa-B and p53-mediated gene transcription. In Mus musculus (Mouse), this protein is Serine/threonine-protein kinase 40 (Stk40).